A 465-amino-acid polypeptide reads, in one-letter code: A-type ATP synthase subunit B (465 aa).

This sequence belongs to the ATPase alpha/beta chains family. Has multiple subunits with at least A(3), B(3), C, D, E, F, H, I and proteolipid K(x).

The protein resides in the cell membrane. Functionally, component of the A-type ATP synthase that produces ATP from ADP in the presence of a proton gradient across the membrane. The B chain is a regulatory subunit. The sequence is that of A-type ATP synthase subunit B from Sulfurisphaera tokodaii (strain DSM 16993 / JCM 10545 / NBRC 100140 / 7) (Sulfolobus tokodaii).